A 259-amino-acid polypeptide reads, in one-letter code: Small ribosomal subunit protein eS4 (259 aa).

The region spanning 41–100 (LPLSLFLRNRLKYALNYTEAKKILTQRVVRVDGKVRTCHKFPTGFMDVVAIERTNEYFRM) is the S4 RNA-binding domain.

Belongs to the eukaryotic ribosomal protein eS4 family.

The protein is Small ribosomal subunit protein eS4 (rps-4) of Caenorhabditis elegans.